Here is an 875-residue protein sequence, read N- to C-terminus: GATOR2 complex protein MIOS (875 aa).

WD repeat units follow at residues proline 61 to phenylalanine 100, lysine 111 to isoleucine 155, glycine 182 to phenylalanine 221, asparagine 223 to leucine 261, glutamate 265 to glycine 306, and arginine 395 to threonine 437. Residues valine 735 to proline 781 form a C4-type zinc finger. Positions 737 and 740 each coordinate Zn(2+). Phosphoserine occurs at positions 759 and 766. Zn(2+) is bound by residues cysteine 775, cysteine 778, cysteine 788, cysteine 827, cysteine 830, histidine 832, histidine 835, histidine 838, cysteine 849, cysteine 854, and cysteine 858. Residues leucine 782–threonine 863 form an RING-type; atypical zinc finger.

The protein belongs to the WD repeat mio family. As to quaternary structure, component of the GATOR2 subcomplex, composed of MIOS, SEC13, SEH1L, WDR24 and WDR59. The GATOR2 complex interacts with CASTOR1 and CASTOR2; the interaction is negatively regulated by arginine. CASTOR1 and CASTOR2 convey leucine availability via direct interaction with MIOS. The GATOR2 complex interacts with SESN1, SESN2 and SESN3; the interaction is negatively regulated by amino acids. Interacts with SAR1A and SAR1B; the interaction is direct, disrupted by leucine and mediates the interaction of SAR1A or SAR1B with the GATOR2 complex to negatively regulate the TORC1 signaling upon leucine deprivation.

It localises to the lysosome membrane. The GATOR2 complex is negatively regulated by the upstream amino acid sensors CASTOR1 and SESN2, which sequester the GATOR2 complex in absence of amino acids. In the presence of abundant amino acids, GATOR2 is released from CASTOR1 and SESN2 and activated. Functionally, as a component of the GATOR2 complex, functions as an activator of the amino acid-sensing branch of the mTORC1 signaling pathway. The GATOR2 complex indirectly activates mTORC1 through the inhibition of the GATOR1 subcomplex. GATOR2 probably acts as an E3 ubiquitin-protein ligase toward GATOR1. In the presence of abundant amino acids, the GATOR2 complex mediates ubiquitination of the NPRL2 core component of the GATOR1 complex, leading to GATOR1 inactivation. In the absence of amino acids, GATOR2 is inhibited, activating the GATOR1 complex. Within the GATOR2 complex, MIOS is required to prevent autoubiquitination of WDR24, the catalytic subunit of the complex. The GATOR2 complex is required for brain myelination. This is GATOR2 complex protein MIOS from Pongo abelii (Sumatran orangutan).